Here is a 237-residue protein sequence, read N- to C-terminus: LexA repressor (237 aa).

A DNA-binding region (H-T-H motif) is located at residues 26 to 46; it reads FDEMKIALELTSKSGIHRLIT. Active-site for autocatalytic cleavage activity residues include serine 158 and lysine 196.

The protein belongs to the peptidase S24 family. Homodimer.

It catalyses the reaction Hydrolysis of Ala-|-Gly bond in repressor LexA.. Functionally, represses a number of genes involved in the response to DNA damage (SOS response), including recA and lexA. In the presence of single-stranded DNA, RecA interacts with LexA causing an autocatalytic cleavage which disrupts the DNA-binding part of LexA, leading to derepression of the SOS regulon and eventually DNA repair. The protein is LexA repressor of Bartonella quintana (strain Toulouse) (Rochalimaea quintana).